Reading from the N-terminus, the 505-residue chain is Structural protein 27 (505 aa).

Hydrophobic stretches follow at residues Val20–Val40, Met423–Ile443, and Ile470–Val490.

It is found in the virion. The polypeptide is Structural protein 27 (His1 virus (isolate Australia/Victoria) (His1V)).